An 846-amino-acid chain; its full sequence is DNA mismatch repair protein MutS (846 aa).

610-617 (GPNMGGKS) provides a ligand contact to ATP.

This sequence belongs to the DNA mismatch repair MutS family.

In terms of biological role, this protein is involved in the repair of mismatches in DNA. It is possible that it carries out the mismatch recognition step. This protein has a weak ATPase activity. The protein is DNA mismatch repair protein MutS of Legionella pneumophila (strain Corby).